We begin with the raw amino-acid sequence, 513 residues long: uncharacterized protein (513 aa).

A run of 5 helical transmembrane segments spans residues 262–282 (FAIF…FWQL), 304–324 (YMFL…ITYH), 341–361 (EPIP…FEAL), 382–402 (LVIG…VIIV), and 429–449 (MFLA…ILVL). The tract at residues 489–513 (PGTYSRGNGQKGAKREDPKDEENNI) is disordered. A compositionally biased stretch (basic and acidic residues) spans 501–513 (AKREDPKDEENNI).

The protein belongs to the GerABKA family.

It is found in the cell membrane. This is an uncharacterized protein from Bacillus subtilis (strain 168).